A 781-amino-acid polypeptide reads, in one-letter code: Aconitate hydratase, mitochondrial (781 aa).

A mitochondrion-targeting transit peptide spans 1 to 27 (MAPYSLLVTRLQKALGVRQYHVASVLC). Pyrrolidone carboxylic acid is present on Q28. At K31 the chain carries N6-succinyllysine. K50 carries the N6-acetyllysine; alternate modification. K50 is modified (N6-succinyllysine; alternate). Q99 provides a ligand contact to substrate. 2 positions are modified to N6-acetyllysine; alternate: K138 and K144. 2 positions are modified to N6-succinyllysine; alternate: K138 and K144. 192-194 (DSH) serves as a coordination point for substrate. An N6-acetyllysine; alternate modification is found at K233. Residue K233 is modified to N6-succinyllysine; alternate. A [4Fe-4S] cluster-binding site is contributed by C385. K411 bears the N6-succinyllysine mark. Residues C448 and C451 each contribute to the [4Fe-4S] cluster site. 2 residues coordinate substrate: R474 and R479. K517 and K523 each carry N6-acetyllysine; alternate. Residues K517 and K523 each carry the N6-succinyllysine; alternate modification. Over residues 524 to 537 (LEAPDADELPRAEF) the composition is skewed to basic and acidic residues. Residues 524–561 (LEAPDADELPRAEFDPGQDTYQHPPKDSSGQRVDVSPT) form a disordered region. N6-succinyllysine is present on K549. Polar residues predominate over residues 551–561 (SSGQRVDVSPT). Position 559 is a phosphoserine (S559). K573 is subject to N6-acetyllysine; alternate. N6-succinyllysine; alternate is present on K573. Residues K577 and K591 each carry the N6-succinyllysine modification. K605 carries the N6-acetyllysine; alternate modification. N6-succinyllysine; alternate is present on K605. R607 serves as a coordination point for substrate. The residue at position 628 (K628) is an N6-succinyllysine. Position 670 is a phosphoserine (S670). 670 to 671 (SR) is a binding site for substrate. K689 is modified (N6-succinyllysine). An N6-acetyllysine; alternate mark is found at K723 and K730. 2 positions are modified to N6-succinyllysine; alternate: K723 and K730. K736, K739, and K743 each carry N6-acetyllysine.

This sequence belongs to the aconitase/IPM isomerase family. In terms of assembly, monomer. [4Fe-4S] cluster serves as cofactor. In terms of processing, forms covalent cross-links mediated by transglutaminase TGM2, between a glutamine and the epsilon-amino group of a lysine residue, forming homopolymers and heteropolymers.

It localises to the mitochondrion. It catalyses the reaction citrate = D-threo-isocitrate. Its pathway is carbohydrate metabolism; tricarboxylic acid cycle; isocitrate from oxaloacetate: step 2/2. In terms of biological role, catalyzes the isomerization of citrate to isocitrate via cis-aconitate. This is Aconitate hydratase, mitochondrial (ACO2) from Sus scrofa (Pig).